The sequence spans 503 residues: MSKLRVMSLFSGIGAFEAALRNIGVEYELVGFSEIDKYAIKSYCAIHNADEQLNFGDVSKIDKKKLPEFDLLVGGSPCQSFSVAGYRKGFEDTRGTLFFQYIDTLKEKQPRYFVFENVKGLINHDKGNTLNIMAESFSEVGYRIDLELLNSKFFNVPQNRERIYIIGVREDLIENDEWVVEKGRNDVLSKGKKRLKELNIKSFNFKWSAQDIVGRRLREILEEYVDEKYYLSEEKTSKLIEQIEKPKEKDVVFVGGINVGKRWLNNGKTYSRNFKQGNRVYDSNGIATTLTSQSVGGLGGQTSLYKVEDPIMIGHIDLKGHDAIKRVYSPDGVSPTLTTMGEGHREPKIAVEYVGNINPSGKGMNDQVYNSNGLSPTLTTNKGEGVKISVPNPEIRPVLTPEREEKRQNGRRFKEDDEPAFTVNTIDRHGVAIGEYPKYRIRKLTPLECWRLQAFDEEDFEKALSVGISNSQLYKQAGNSITVTVLESIFKELIHTYVNEESE.

The SAM-dependent MTase C5-type domain maps to 4 to 500; the sequence is LRVMSLFSGI…KELIHTYVNE (497 aa). Residue C78 is part of the active site.

Belongs to the class I-like SAM-binding methyltransferase superfamily. C5-methyltransferase family.

The catalysed reaction is a 2'-deoxycytidine in DNA + S-adenosyl-L-methionine = a 5-methyl-2'-deoxycytidine in DNA + S-adenosyl-L-homocysteine + H(+). In terms of biological role, a methyltransferase that methylates C-? within the sequences 5'-GGCC-3' and 5'-GAGCTC-3'. A methyltransferase that methylates C-1 within the sequences 5'-GGCC-3' and C-2 in 5'-GCNGC-3'. Modification confers resistance against restriction enzymes that recognize these sequences. The polypeptide is Orphan methyltransferase M.Rho11sI (Bacillus subtilis (Bacteriophage rho-11s)).